The chain runs to 51 residues: Putative inactivation escape 1 protein (51 aa).

As to expression, highly expressed in pancreas, heart and liver followed by brain, placenta, lung, skeletal muscle and kidney. Mostly expressed in females.

In Homo sapiens (Human), this protein is Putative inactivation escape 1 protein (INE1).